The primary structure comprises 198 residues: MEITIEMIKELRERTGAGVMEAKKALEEANGDMEKAVTILREKGVIKAAKKAGRVAKEGIIEAYIHTGDKLGVLVEINCETDFVARTDEFRKLAKDIALQIAGMNPQYVSKEDVPPEVIEKEKEIYRTQLRNEGKPEHVIEKIIEGKLEKFYEEVCLLEQPFVRNPEIKVKDLITEAISKLGENIVVRRFARFVVGEE.

Positions 81–84 are involved in Mg(2+) ion dislocation from EF-Tu; the sequence is TDFV.

It belongs to the EF-Ts family.

The protein resides in the cytoplasm. Its function is as follows. Associates with the EF-Tu.GDP complex and induces the exchange of GDP to GTP. It remains bound to the aminoacyl-tRNA.EF-Tu.GTP complex up to the GTP hydrolysis stage on the ribosome. This chain is Elongation factor Ts, found in Dictyoglomus turgidum (strain DSM 6724 / Z-1310).